A 589-amino-acid chain; its full sequence is Kelch-like protein 25 (589 aa).

The BTB domain occupies 46 to 114 (TDVTLWAGNR…AYSSKIIINE (69 aa)). Residues 149-250 (CLGMMILSDA…LPSELLKEAV (102 aa)) form the BACK domain. Kelch repeat units follow at residues 296–340 (TLLI…AIGC), 341–388 (KVYV…ELEN), 389–444 (CLYV…SAKL), 446–492 (LFAF…VLGS), 493–538 (QIFI…ASGN), and 539–585 (KVYV…STWK).

As to quaternary structure, component of the BCR(KLHL25) E3 ubiquitin ligase complex, at least composed of cul3, klhl25 and rbx1.

Its pathway is protein modification; protein ubiquitination. In terms of biological role, substrate-specific adapter of a BCR (BTB-CUL3-RBX1) E3 ubiquitin ligase complex involved in various processes, such as translation homeostasis and lipid synthesis. The BCR(KLHL25) ubiquitin ligase complex acts by mediating ubiquitination of hypophosphorylated eif4ebp1 (4E-BP1): ubiquitination and subsequent degradation of hypophosphorylated EIF4EBP1 (4E-BP1) probably serves as a homeostatic mechanism to maintain translation and prevent eIF4E inhibition when eIF4E levels are low. The BCR(KLHL25) complex also acts as a regulator of lipid synthesis by mediating ubiquitination and degradation of ACLY, thereby inhibiting lipid synthesis. This is Kelch-like protein 25 from Xenopus tropicalis (Western clawed frog).